The primary structure comprises 493 residues: tRNA(Ile)-lysidine synthase (493 aa).

26 to 31 (SGGSDS) serves as a coordination point for ATP.

This sequence belongs to the tRNA(Ile)-lysidine synthase family.

It localises to the cytoplasm. It carries out the reaction cytidine(34) in tRNA(Ile2) + L-lysine + ATP = lysidine(34) in tRNA(Ile2) + AMP + diphosphate + H(+). Functionally, ligates lysine onto the cytidine present at position 34 of the AUA codon-specific tRNA(Ile) that contains the anticodon CAU, in an ATP-dependent manner. Cytidine is converted to lysidine, thus changing the amino acid specificity of the tRNA from methionine to isoleucine. This Bartonella henselae (strain ATCC 49882 / DSM 28221 / CCUG 30454 / Houston 1) (Rochalimaea henselae) protein is tRNA(Ile)-lysidine synthase.